The primary structure comprises 528 residues: GMP synthase [glutamine-hydrolyzing] (528 aa).

One can recognise a Glutamine amidotransferase type-1 domain in the interval 13-204; it reads AIVILDFGSQ…VYDICSCEPD (192 aa). Cys90 functions as the Nucleophile in the catalytic mechanism. Residues His178 and Glu180 contribute to the active site. In terms of domain architecture, GMPS ATP-PPase spans 205-403; the sequence is WTTNLFIDEA…LGLPDEIVRR (199 aa). 232-238 lines the ATP pocket; sequence SGGVDSS.

As to quaternary structure, homodimer.

The catalysed reaction is XMP + L-glutamine + ATP + H2O = GMP + L-glutamate + AMP + diphosphate + 2 H(+). The protein operates within purine metabolism; GMP biosynthesis; GMP from XMP (L-Gln route): step 1/1. Catalyzes the synthesis of GMP from XMP. The sequence is that of GMP synthase [glutamine-hydrolyzing] from Prochlorococcus marinus (strain NATL1A).